A 340-amino-acid chain; its full sequence is MSDINDISSYDYFLPEMLIAKEPVLPKEEARLLVYLKKTKEIKHYKFKDLASLIPDDAAVIFNNTKVIKARILGHKQSGGACEVMLNQPLGDNKFSVYVRGRVSVGSVLNFADDIKVNVLELNDDGSRVVNFTKNGVILDTAQLFSELEKIGHVPLPPYIKRADTKDDESWYQSIFAKNSGAVAAPTASLHFSEQMLERIKAKHDIAYITLHVGAGTFKGVECQNINDHKMHSEFYELSEKAQEIISSNKPILGVGTTVTRCVEEFARSKQSSGFCKLFLNLNNKPIRQNYLLTNFHLPKSTLIMLVTSFIGLEETMRIYETAVSEKYRFYSYGDGMLVI.

It belongs to the QueA family. In terms of assembly, monomer.

The protein localises to the cytoplasm. The catalysed reaction is 7-aminomethyl-7-carbaguanosine(34) in tRNA + S-adenosyl-L-methionine = epoxyqueuosine(34) in tRNA + adenine + L-methionine + 2 H(+). It functions in the pathway tRNA modification; tRNA-queuosine biosynthesis. Functionally, transfers and isomerizes the ribose moiety from AdoMet to the 7-aminomethyl group of 7-deazaguanine (preQ1-tRNA) to give epoxyqueuosine (oQ-tRNA). In Campylobacter concisus (strain 13826), this protein is S-adenosylmethionine:tRNA ribosyltransferase-isomerase.